The following is a 254-amino-acid chain: Tumor necrosis factor ligand superfamily member 9 (254 aa).

The Cytoplasmic portion of the chain corresponds to 1-28 (MEYASDASLDPEAPWPPAPRARACRVLP). The chain crosses the membrane as a helical; Signal-anchor for type II membrane protein span at residues 29-49 (WALVAGLLLLLLLAAACAVFL). Residues 50 to 254 (ACPWAVSGAR…PAGLPSPRSE (205 aa)) are Extracellular-facing. The region spanning 91 to 240 (MFAQLVAQNV…GATVLGLFRV (150 aa)) is the THD domain.

This sequence belongs to the tumor necrosis factor family. Homotrimer. Expressed in brain, placenta, lung, skeletal muscle and kidney.

The protein resides in the membrane. Functionally, cytokine that binds to TNFRSF9. Induces the proliferation of activated peripheral blood T-cells. May have a role in activation-induced cell death (AICD). May play a role in cognate interactions between T-cells and B-cells/macrophages. The sequence is that of Tumor necrosis factor ligand superfamily member 9 (TNFSF9) from Homo sapiens (Human).